An 89-amino-acid polypeptide reads, in one-letter code: Acylphosphatase (89 aa).

Residues 3–89 (ALEIYVSGNV…ENYESFEVAY (87 aa)) form the Acylphosphatase-like domain. Residues arginine 18 and asparagine 36 contribute to the active site.

This sequence belongs to the acylphosphatase family.

The enzyme catalyses an acyl phosphate + H2O = a carboxylate + phosphate + H(+). This is Acylphosphatase (acyP) from Archaeoglobus fulgidus (strain ATCC 49558 / DSM 4304 / JCM 9628 / NBRC 100126 / VC-16).